A 548-amino-acid polypeptide reads, in one-letter code: Putative malate oxidoreductase [NAD] (548 aa).

Catalysis depends on Y96, which acts as the Proton donor. Catalysis depends on K169, which acts as the Proton acceptor. The a divalent metal cation site is built by E240, D241, and D264. NAD(+)-binding positions include 297 to 300, N410, and N455; that span reads AGTA.

Belongs to the malic enzymes family. Requires Mg(2+) as cofactor. It depends on Mn(2+) as a cofactor.

The enzyme catalyses (S)-malate + NAD(+) = pyruvate + CO2 + NADH. The catalysed reaction is oxaloacetate + H(+) = pyruvate + CO2. This Mycobacterium tuberculosis (strain CDC 1551 / Oshkosh) protein is Putative malate oxidoreductase [NAD] (mez).